The following is a 562-amino-acid chain: Arf-GAP domain and FG repeat-containing protein 1 (562 aa).

An Arf-GAP domain is found at 11-135 (EKHLKMLRDM…WYVPPEQAKV (125 aa)). The segment at 29–52 (CFDCDQRGPTYVNMTVGSFVCTSC) adopts a C4-type zinc-finger fold. Residues 145 to 193 (GSSASSTSSTPEVKPLKSLLGDSAPTLHLNKGTPSQSPVVGRSQGQQQE) form a disordered region. Ser-167 bears the Phosphoserine mark. The segment covering 176–191 (GTPSQSPVVGRSQGQQ) has biased composition (polar residues). Position 177 is a phosphothreonine (Thr-177). Phosphoserine occurs at positions 181 and 362. O-linked (GlcNAc) serine glycosylation occurs at Ser-367.

As to quaternary structure, interacts with EPS15R and EPS15. Interacts with FCHO1. Post-translationally, O-glycosylated. As to expression, ubiquitously expressed.

The protein resides in the nucleus. Its subcellular location is the cytoplasmic vesicle. Its function is as follows. Required for vesicle docking or fusion during acrosome biogenesis. May play a role in RNA trafficking or localization. In case of infection by HIV-1, acts as a cofactor for viral Rev and promotes movement of Rev-responsive element-containing RNAs from the nuclear periphery to the cytoplasm. This step is essential for HIV-1 replication. This Homo sapiens (Human) protein is Arf-GAP domain and FG repeat-containing protein 1 (AGFG1).